The following is a 579-amino-acid chain: MNQQPLPPQSERRALAIGRAVYEAFQDYHAQFSQITARARQRFETRDWSGAREDAVARIALYDHYISECMLRLRAVLLGQAHDRALWMRARTHYAELLTGLIDQELYKTFYNTLTRRYFRTQGVDAQIEFIALDIEPTDAITVPVARHTYAVSPGRLTEMLVRVLGDYPFEVPYAHRTRCAAAIAVRLLDDLAHWGEHPVRSVELLETVFYRERRAYLVGRLFGEHRFSPCVIALVNDDAGLRAEAVLTRRSDVAQLFSNSRSYFQADLTTVGDAVVFLRSLLTHKPIDELYTMLGRAKQGKTERYRTFFRHFQAHPAEQLVHADGTPGMVMVVFTLPSYPLVFKLIRDRFAYPKTMSRAQVEGKYELVFQLDRIGRLLDAQPYRFLRFPKARFSPALLQDLQSSCAMSLSEDGDDVLIALCYVQRRLRPLNLYLREQLPAAAHAAALDYGQAIKDMARNNIFPGDMLLKNFGITRHQRAVFYDYDELCLITECTFRDWPTPTSYEEQMAAEPWFHVGPRDVFPERFALFMGLPSSQLEAVKHMHPELFDPQWWRDLQARLREDDYPDTPPYADAQKLA.

ATP contacts are provided by residues 324 to 330 (ADGTPGM) and Lys-345. The active site involves Asp-380.

It belongs to the AceK family.

It is found in the cytoplasm. It carries out the reaction L-seryl-[isocitrate dehydrogenase] + ATP = O-phospho-L-seryl-[isocitrate dehydrogenase] + ADP + H(+). Its function is as follows. Bifunctional enzyme which can phosphorylate or dephosphorylate isocitrate dehydrogenase (IDH) on a specific serine residue. This is a regulatory mechanism which enables bacteria to bypass the Krebs cycle via the glyoxylate shunt in response to the source of carbon. When bacteria are grown on glucose, IDH is fully active and unphosphorylated, but when grown on acetate or ethanol, the activity of IDH declines drastically concomitant with its phosphorylation. This chain is Isocitrate dehydrogenase kinase/phosphatase, found in Xanthomonas campestris pv. campestris (strain 8004).